The following is a 355-amino-acid chain: Homeobox protein knotted-1-like 12 (355 aa).

Disordered regions lie at residues 52–82 (AAGP…GGGE) and 207–233 (ECVG…PRAE). Positions 60–75 (GHGHPHHGGGHHHSKH) are enriched in basic residues. Residues 218-233 (PSGRENEPPEIDPRAE) are compositionally biased toward basic and acidic residues. Residues 236–256 (ELKFQLLKKYSGYLSSLRQEF) enclose the ELK domain. Residues 257–320 (SKKKKKGKLP…NQRKRHWKPS (64 aa)) constitute a DNA-binding region (homeobox; TALE-type).

This sequence belongs to the TALE/KNOX homeobox family. As to expression, expressed in stems, rachis and inflorescence.

The protein resides in the nucleus. Functionally, probable transcription factor that may be involved in shoot formation during embryogenesis. The polypeptide is Homeobox protein knotted-1-like 12 (OSH15) (Oryza sativa subsp. japonica (Rice)).